The following is a 78-amino-acid chain: Delta-conotoxin-like S6.8 (78 aa).

The signal sequence occupies residues 1-22; it reads MKLTCMMIVAVLFLTAWTFVTA. Positions 23 to 53 are excised as a propeptide; that stretch reads DDSRNGLKNLFPKARHEMKNPDASKLNKRDG. 3 cysteine pairs are disulfide-bonded: cysteine 54–cysteine 69, cysteine 61–cysteine 73, and cysteine 68–cysteine 77.

The protein belongs to the conotoxin O1 superfamily. As to expression, expressed by the venom duct.

The protein resides in the secreted. Its function is as follows. Delta-conotoxins bind to site 6 of voltage-gated sodium channels (Nav) and inhibit the inactivation process. The chain is Delta-conotoxin-like S6.8 from Conus striatus (Striated cone).